Here is a 277-residue protein sequence, read N- to C-terminus: Phosphonates import ATP-binding protein PhnC 2 (277 aa).

Residues 3–251 (ISLNGISVQH…LLQALYAQHL (249 aa)) enclose the ABC transporter domain. 40-47 (GPSGAGKT) is an ATP binding site.

The protein belongs to the ABC transporter superfamily. Phosphonates importer (TC 3.A.1.9.1) family. The complex is composed of two ATP-binding proteins (PhnC), two transmembrane proteins (PhnE) and a solute-binding protein (PhnD).

The protein resides in the cell inner membrane. It catalyses the reaction phosphonate(out) + ATP + H2O = phosphonate(in) + ADP + phosphate + H(+). Part of the ABC transporter complex PhnCDE involved in phosphonates import. Responsible for energy coupling to the transport system. The protein is Phosphonates import ATP-binding protein PhnC 2 of Albidiferax ferrireducens (strain ATCC BAA-621 / DSM 15236 / T118) (Rhodoferax ferrireducens).